The sequence spans 158 residues: SsrA-binding protein (158 aa).

The protein belongs to the SmpB family.

Its subcellular location is the cytoplasm. In terms of biological role, required for rescue of stalled ribosomes mediated by trans-translation. Binds to transfer-messenger RNA (tmRNA), required for stable association of tmRNA with ribosomes. tmRNA and SmpB together mimic tRNA shape, replacing the anticodon stem-loop with SmpB. tmRNA is encoded by the ssrA gene; the 2 termini fold to resemble tRNA(Ala) and it encodes a 'tag peptide', a short internal open reading frame. During trans-translation Ala-aminoacylated tmRNA acts like a tRNA, entering the A-site of stalled ribosomes, displacing the stalled mRNA. The ribosome then switches to translate the ORF on the tmRNA; the nascent peptide is terminated with the 'tag peptide' encoded by the tmRNA and targeted for degradation. The ribosome is freed to recommence translation, which seems to be the essential function of trans-translation. This Psychrobacter sp. (strain PRwf-1) protein is SsrA-binding protein.